The chain runs to 276 residues: MGKGPGLYTEIGKKARDLLYKDYQSDHKFSITTYSPTGVVITSSGSKKGDLFLADVNTQLKNKNVTTDIKVDTNSNLFTTITVDEAAPGLKTILSFRVPDQRSGKLEVQYLHDYAGICTSVGLTANPIVNFSGVVGTNIIALGTDVSFDTKTGDFTKCNAGLSFTNADLVASLNLNNKGDNLTASYYHTVSPLTSTAVGAEVNHSFSTNENIITVGTQHRLDPLTSVKARINNFGKASALLQHEWRPKSLFTVSGEVDTKSVDKGAKFGLALALKP.

Belongs to the eukaryotic mitochondrial porin (TC 1.B.8.1) family.

The protein localises to the mitochondrion outer membrane. In terms of biological role, forms a channel through the cell membrane that allows diffusion of small hydrophilic molecules. The channel adopts an open conformation at low or zero membrane potential and a closed conformation at potentials above 30-40 mV. The open state has a weak anion selectivity whereas the closed state is cation-selective. The chain is Mitochondrial outer membrane protein porin of 34 kDa from Solanum tuberosum (Potato).